The sequence spans 945 residues: LPS-assembly protein LptD (945 aa).

A signal peptide spans 1–33 (MALKSPAFRKKFPLLVTGSLLALQPLATSFVVA). The segment at 56 to 98 (AQLPPRPVHDANSVSSSVATAADATGEEASGDKSKLVTEAKGR) is disordered. A compositionally biased stretch (low complexity) spans 65–79 (DANSVSSSVATAADA). Over residues 85-98 (SGDKSKLVTEAKGR) the composition is skewed to basic and acidic residues.

The protein belongs to the LptD family. Component of the lipopolysaccharide transport and assembly complex. Interacts with LptE and LptA.

It is found in the cell outer membrane. In terms of biological role, together with LptE, is involved in the assembly of lipopolysaccharide (LPS) at the surface of the outer membrane. The polypeptide is LPS-assembly protein LptD (Pseudomonas fluorescens (strain ATCC BAA-477 / NRRL B-23932 / Pf-5)).